Consider the following 277-residue polypeptide: Thymidylate synthase (277 aa).

Position 21 (R21) interacts with dUMP. H51 is a binding site for (6R)-5,10-methylene-5,6,7,8-tetrahydrofolate. Position 126 to 127 (126 to 127 (RR)) interacts with dUMP. C159 functions as the Nucleophile in the catalytic mechanism. DUMP is bound by residues 179–182 (RSAD), N190, and 220–222 (HLY). Position 182 (D182) interacts with (6R)-5,10-methylene-5,6,7,8-tetrahydrofolate. A (6R)-5,10-methylene-5,6,7,8-tetrahydrofolate-binding site is contributed by S276.

It belongs to the thymidylate synthase family. Bacterial-type ThyA subfamily. In terms of assembly, homodimer.

It is found in the cytoplasm. The catalysed reaction is dUMP + (6R)-5,10-methylene-5,6,7,8-tetrahydrofolate = 7,8-dihydrofolate + dTMP. It functions in the pathway pyrimidine metabolism; dTTP biosynthesis. Its function is as follows. Catalyzes the reductive methylation of 2'-deoxyuridine-5'-monophosphate (dUMP) to 2'-deoxythymidine-5'-monophosphate (dTMP) while utilizing 5,10-methylenetetrahydrofolate (mTHF) as the methyl donor and reductant in the reaction, yielding dihydrofolate (DHF) as a by-product. This enzymatic reaction provides an intracellular de novo source of dTMP, an essential precursor for DNA biosynthesis. The protein is Thymidylate synthase of Teredinibacter turnerae (strain ATCC 39867 / T7901).